Here is a 378-residue protein sequence, read N- to C-terminus: Erythronate-4-phosphate dehydrogenase (378 aa).

Substrate is bound by residues S45 and T66. NAD(+) contacts are provided by D146 and T175. Residue R208 is part of the active site. D232 is a binding site for NAD(+). The active site involves E237. H254 functions as the Proton donor in the catalytic mechanism. G257 serves as a coordination point for NAD(+). Y258 is a binding site for substrate.

The protein belongs to the D-isomer specific 2-hydroxyacid dehydrogenase family. PdxB subfamily. As to quaternary structure, homodimer.

It is found in the cytoplasm. It catalyses the reaction 4-phospho-D-erythronate + NAD(+) = (R)-3-hydroxy-2-oxo-4-phosphooxybutanoate + NADH + H(+). Its pathway is cofactor biosynthesis; pyridoxine 5'-phosphate biosynthesis; pyridoxine 5'-phosphate from D-erythrose 4-phosphate: step 2/5. Its function is as follows. Catalyzes the oxidation of erythronate-4-phosphate to 3-hydroxy-2-oxo-4-phosphonooxybutanoate. In Escherichia coli O8 (strain IAI1), this protein is Erythronate-4-phosphate dehydrogenase.